We begin with the raw amino-acid sequence, 331 residues long: Holliday junction branch migration complex subunit RuvB (331 aa).

The large ATPase domain (RuvB-L) stretch occupies residues 1–178 (MRNSIFEQEE…FGITLRLDFY (178 aa)). Residues Leu-17, Arg-18, Gly-59, Lys-62, Thr-63, Thr-64, 125–127 (EDY), Arg-168, Tyr-178, and Arg-215 each bind ATP. Thr-63 is a Mg(2+) binding site. Residues 179–249 (TVSELLQLLQ…FADLALNKME (71 aa)) are small ATPAse domain (RuvB-S). The segment at 252–331 (QFGLDKLDYT…LSTINSARLP (80 aa)) is head domain (RuvB-H). Arg-307 and Arg-312 together coordinate DNA.

This sequence belongs to the RuvB family. Homohexamer. Forms an RuvA(8)-RuvB(12)-Holliday junction (HJ) complex. HJ DNA is sandwiched between 2 RuvA tetramers; dsDNA enters through RuvA and exits via RuvB. An RuvB hexamer assembles on each DNA strand where it exits the tetramer. Each RuvB hexamer is contacted by two RuvA subunits (via domain III) on 2 adjacent RuvB subunits; this complex drives branch migration. In the full resolvosome a probable DNA-RuvA(4)-RuvB(12)-RuvC(2) complex forms which resolves the HJ.

The protein resides in the cytoplasm. The enzyme catalyses ATP + H2O = ADP + phosphate + H(+). In terms of biological role, the RuvA-RuvB-RuvC complex processes Holliday junction (HJ) DNA during genetic recombination and DNA repair, while the RuvA-RuvB complex plays an important role in the rescue of blocked DNA replication forks via replication fork reversal (RFR). RuvA specifically binds to HJ cruciform DNA, conferring on it an open structure. The RuvB hexamer acts as an ATP-dependent pump, pulling dsDNA into and through the RuvAB complex. RuvB forms 2 homohexamers on either side of HJ DNA bound by 1 or 2 RuvA tetramers; 4 subunits per hexamer contact DNA at a time. Coordinated motions by a converter formed by DNA-disengaged RuvB subunits stimulates ATP hydrolysis and nucleotide exchange. Immobilization of the converter enables RuvB to convert the ATP-contained energy into a lever motion, pulling 2 nucleotides of DNA out of the RuvA tetramer per ATP hydrolyzed, thus driving DNA branch migration. The RuvB motors rotate together with the DNA substrate, which together with the progressing nucleotide cycle form the mechanistic basis for DNA recombination by continuous HJ branch migration. Branch migration allows RuvC to scan DNA until it finds its consensus sequence, where it cleaves and resolves cruciform DNA. This is Holliday junction branch migration complex subunit RuvB from Neorickettsia sennetsu (strain ATCC VR-367 / Miyayama) (Ehrlichia sennetsu).